We begin with the raw amino-acid sequence, 93 residues long: Ferredoxin-2 (93 aa).

The 90-residue stretch at Y2–D91 folds into the 2Fe-2S ferredoxin-type domain. [2Fe-2S] cluster-binding residues include C37, C42, C45, and C75.

Belongs to the 2Fe2S plant-type ferredoxin family. [2Fe-2S] cluster serves as cofactor.

It localises to the plastid. The protein resides in the chloroplast. Its function is as follows. Ferredoxins are iron-sulfur proteins that transfer electrons in a wide variety of metabolic reactions. This chain is Ferredoxin-2, found in Equisetum telmateia (Great horsetail).